The chain runs to 171 residues: RNA silencing suppressor p19 (171 aa).

Basic and acidic residues predominate over residues 1–15; it reads MERAIPGNDTREPAY. Residues 1-32 are disordered; sequence MERAIPGNDTREPAYGERWNGGPGGSTSPFQL.

This sequence belongs to the tombusvirus protein p19 family. In terms of assembly, homodimer.

Its function is as follows. Viral suppressor of RNA silencing which binds specifically to silencing RNAs (siRNAs). Acts as a molecular caliper to specifically select siRNAs based on the length of the duplex region of the RNA. The protein is RNA silencing suppressor p19 of Capsicum annuum (Capsicum pepper).